The sequence spans 1491 residues: Chromosome partition protein MukB (1491 aa).

34-41 (GGNGAGKS) lines the ATP pocket. Coiled-coil stretches lie at residues 302–450 (LIEQ…LKAE), 490–600 (ARSE…RFES), 781–806 (RAAREQRLELLREERDDVVEQHAKAS), 836–1109 (EQAL…DLRT), and 1210–1239 (VEAIEEMEVELARLTEELTQREQRLAISSD). Residues 667–784 (PGGSNDPRLK…AIPLFGRAAR (118 aa)) are flexible hinge. Residues 1059 to 1080 (QRRRDELQERLHTSRSRKSEYE) form a disordered region.

This sequence belongs to the SMC family. MukB subfamily. In terms of assembly, homodimerization via its hinge domain. Binds to DNA via its C-terminal region. Interacts, and probably forms a ternary complex, with MukE and MukF via its C-terminal region. The complex formation is stimulated by calcium or magnesium. Interacts with tubulin-related protein FtsZ.

The protein resides in the cytoplasm. Its subcellular location is the nucleoid. Its function is as follows. Plays a central role in chromosome condensation, segregation and cell cycle progression. Functions as a homodimer, which is essential for chromosome partition. Involved in negative DNA supercoiling in vivo, and by this means organize and compact chromosomes. May achieve or facilitate chromosome segregation by condensation DNA from both sides of a centrally located replisome during cell division. The sequence is that of Chromosome partition protein MukB from Vibrio cholerae serotype O1 (strain ATCC 39315 / El Tor Inaba N16961).